A 335-amino-acid polypeptide reads, in one-letter code: GTPase Obg (335 aa).

The 159-residue stretch at 1-159 folds into the Obg domain; that stretch reads MKFVDSAKIS…IELEMELKLM (159 aa). The 164-residue stretch at 160–323 folds into the OBG-type G domain; sequence ADVGLVGFPN…LKDELWRQIS (164 aa). GTP contacts are provided by residues 166-173, 191-195, 213-216, 280-283, and 304-306; these read GFPNAGKS, FTTLV, DIPG, TKMD, and SSV. Mg(2+) is bound by residues serine 173 and threonine 193.

The protein belongs to the TRAFAC class OBG-HflX-like GTPase superfamily. OBG GTPase family. In terms of assembly, monomer. It depends on Mg(2+) as a cofactor.

It is found in the cytoplasm. An essential GTPase which binds GTP, GDP and possibly (p)ppGpp with moderate affinity, with high nucleotide exchange rates and a fairly low GTP hydrolysis rate. Plays a role in control of the cell cycle, stress response, ribosome biogenesis and in those bacteria that undergo differentiation, in morphogenesis control. The chain is GTPase Obg from Chlorobaculum parvum (strain DSM 263 / NCIMB 8327) (Chlorobium vibrioforme subsp. thiosulfatophilum).